The chain runs to 196 residues: Large ribosomal subunit protein bL9c (196 aa).

The N-terminal 41 residues, 1 to 41, are a transit peptide targeting the chloroplast; it reads MASTTSTLSLSWSNSFHSFAGAISEPQKSPENCRVMLPIVA.

As to quaternary structure, component of the chloroplast large ribosomal subunit (LSU). Mature 70S chloroplast ribosomes of higher plants consist of a small (30S) and a large (50S) subunit. The 30S small subunit contains 1 molecule of ribosomal RNA (16S rRNA) and 24 different proteins. The 50S large subunit contains 3 rRNA molecules (23S, 5S and 4.5S rRNA) and 33 different proteins.

It is found in the plastid. The protein localises to the chloroplast. Its function is as follows. Component of the chloroplast ribosome (chloro-ribosome), a dedicated translation machinery responsible for the synthesis of chloroplast genome-encoded proteins, including proteins of the transcription and translation machinery and components of the photosynthetic apparatus. The sequence is that of Large ribosomal subunit protein bL9c (RPL9) from Spinacia oleracea (Spinach).